A 703-amino-acid polypeptide reads, in one-letter code: Elongation factor G (703 aa).

The tr-type G domain maps to 8–290 (ARYRNIGICA…AVIEYLPAPT (283 aa)). GTP-binding positions include 17–24 (AHVDAGKT), 88–92 (DTPGH), and 142–145 (NKMD).

Belongs to the TRAFAC class translation factor GTPase superfamily. Classic translation factor GTPase family. EF-G/EF-2 subfamily.

The protein localises to the cytoplasm. Its function is as follows. Catalyzes the GTP-dependent ribosomal translocation step during translation elongation. During this step, the ribosome changes from the pre-translocational (PRE) to the post-translocational (POST) state as the newly formed A-site-bound peptidyl-tRNA and P-site-bound deacylated tRNA move to the P and E sites, respectively. Catalyzes the coordinated movement of the two tRNA molecules, the mRNA and conformational changes in the ribosome. This Teredinibacter turnerae (strain ATCC 39867 / T7901) protein is Elongation factor G.